The sequence spans 291 residues: N-acetylmannosamine kinase (291 aa).

ATP-binding positions include 5-12 (AIDIGGTK) and 132-139 (GVGGGVVS). Zn(2+)-binding residues include histidine 156, cysteine 166, cysteine 168, and cysteine 173.

It belongs to the ROK (NagC/XylR) family. NanK subfamily. As to quaternary structure, homodimer.

The catalysed reaction is an N-acyl-D-mannosamine + ATP = an N-acyl-D-mannosamine 6-phosphate + ADP + H(+). The protein operates within amino-sugar metabolism; N-acetylneuraminate degradation; D-fructose 6-phosphate from N-acetylneuraminate: step 2/5. Its function is as follows. Catalyzes the phosphorylation of N-acetylmannosamine (ManNAc) to ManNAc-6-P. In Escherichia coli O7:K1 (strain IAI39 / ExPEC), this protein is N-acetylmannosamine kinase.